Reading from the N-terminus, the 589-residue chain is Sulfite reductase [NADPH] hemoprotein beta-component (589 aa).

The [4Fe-4S] cluster site is built by Cys-443, Cys-449, Cys-488, and Cys-492. Cys-492 is a binding site for siroheme.

The protein belongs to the nitrite and sulfite reductase 4Fe-4S domain family. As to quaternary structure, alpha(8)-beta(8). The alpha component is a flavoprotein, the beta component is a hemoprotein. Siroheme serves as cofactor. It depends on [4Fe-4S] cluster as a cofactor.

It carries out the reaction hydrogen sulfide + 3 NADP(+) + 3 H2O = sulfite + 3 NADPH + 4 H(+). The protein operates within sulfur metabolism; hydrogen sulfide biosynthesis; hydrogen sulfide from sulfite (NADPH route): step 1/1. Functionally, component of the sulfite reductase complex that catalyzes the 6-electron reduction of sulfite to sulfide. This is one of several activities required for the biosynthesis of L-cysteine from sulfate. The polypeptide is Sulfite reductase [NADPH] hemoprotein beta-component (Neisseria meningitidis serogroup C (strain 053442)).